Here is a 354-residue protein sequence, read N- to C-terminus: uncharacterized protein (354 aa).

Transmembrane regions (helical) follow at residues methionine 9–serine 29, isoleucine 31–threonine 51, asparagine 76–valine 96, phenylalanine 109–valine 129, isoleucine 144–isoleucine 164, glycine 185–valine 205, tyrosine 278–tyrosine 298, glycine 306–glycine 326, and isoleucine 327–isoleucine 347.

It is found in the cell membrane. This is an uncharacterized protein from Methanocaldococcus jannaschii (strain ATCC 43067 / DSM 2661 / JAL-1 / JCM 10045 / NBRC 100440) (Methanococcus jannaschii).